The chain runs to 107 residues: Small ribosomal subunit protein bS18c (107 aa).

The segment covering 85-95 has biased composition (basic residues); that stretch reads KKAQRFKRRQS. The disordered stretch occupies residues 85–107; that stretch reads KKAQRFKRRQSTARTVGLRTRNK.

Belongs to the bacterial ribosomal protein bS18 family. Part of the 30S ribosomal subunit.

Its subcellular location is the plastid. It is found in the chloroplast. The protein is Small ribosomal subunit protein bS18c of Oenothera argillicola (Appalachian evening primrose).